The primary structure comprises 198 residues: Density-regulated protein (198 aa).

The disordered stretch occupies residues 76–110 (QETGTVEGQATSGEEEEKKKQKRGGRGQIKQKKKT). The span at 77-87 (ETGTVEGQATS) shows a compositional bias: polar residues. Positions 95-110 (KQKRGGRGQIKQKKKT) are enriched in basic residues. An SUI1 domain is found at 115–182 (ITIAKIPRAK…DIIDVIQEKW (68 aa)).

The protein belongs to the DENR family.

In terms of biological role, may be involved in the translation of target mRNAs by scanning and recognition of the initiation codon. Involved in translation initiation; promotes recruitment of aminoacetyled initiator tRNA to P site of 40S ribosomes. Can promote release of deacylated tRNA and mRNA from recycled 40S subunits following ABCE1-mediated dissociation of post-termination ribosomal complexes into subunits. This Xenopus laevis (African clawed frog) protein is Density-regulated protein (denr).